The chain runs to 2690 residues: Non-reducing polyketide synthase pigA (2690 aa).

One can recognise a Starter acyltransferase (SAT) domain in the interval N96 to F211. C140 functions as the Nucleophile; for transacylase activity in the catalytic mechanism. H258 serves as the catalytic Proton donor/acceptor; for transacylase activity. Positions E388–Q804 constitute a Ketosynthase family 3 (KS3) domain. Catalysis depends on for beta-ketoacyl synthase activity residues C553, H688, and H727. Residues F915–S1182 enclose the Malonyl-CoA:ACP transacylase (MAT) domain. Residues L1296 to D1426 form an N-terminal hotdog fold region. Residues L1296–S1602 form the PKS/mFAS DH domain. The product template (PT) domain stretch occupies residues L1323–S1600. H1327 serves as the catalytic Proton acceptor; for dehydratase activity. Positions A1454–S1602 are C-terminal hotdog fold. D1510 (proton donor; for dehydratase activity) is an active-site residue. A Carrier 1 domain is found at P1657–L1731. Position 1691 is an O-(pantetheine 4'-phosphoryl)serine (S1691). A disordered region spans residues L1731–A1764. The segment covering G1736–S1751 has biased composition (acidic residues). Residues P1755 to A1764 are compositionally biased toward polar residues. Residues S1768–S1842 form the Carrier 2 domain. Position 1802 is an O-(pantetheine 4'-phosphoryl)serine (S1802). The tract at residues Q1948–A2255 is methyltransferase domain. Residues V2320–A2564 form the Thioester reductase (TE) domain.

Pantetheine 4'-phosphate is required as a cofactor.

It functions in the pathway secondary metabolite biosynthesis. Non-reducing polyketide synthase; part of the gene cluster that mediates the biosynthesis of azaphilone pigments (MonAzPs), a complex mixture of compounds with a common azaphilone skeleton very widely used as food colorants. PigA catalyzes the first step of MonAzPs biosynthesis and forms the hexaketide precursor from successive condensations of five malonyl-CoA units, with a simple acetyl-CoA starter unit. The starter acyl transferase (SAT) domain of pigA selects an acetyl-CoA starter unit, and the ketoacyl synthase (KS)-acyl transferase (AT)-acyl carrier protein (ACP) domains extend this starter unit five times with malonyl-CoA in five successive decarboxylative Claisen condensation cycles. The methyltransferase (MT) domain conducts a single C-methylation at C-4, most likely at the pentaketide stage. The reactive hexaketide chain then undergoes a product template (PT) domain-mediated C-2 to C-7 aldol cyclization to afford the first aromatic ring, followed by reductive release of the first pathway intermediate by the NADPH-dependent reductive release (R) domain. The role of esterase pigG is not clear, but it may play at most a supplementary role in the formation of the benzaldehyde produced by the pigA nrPKS. This very reactive benzaldehyde is intercepted by the pigC ketoreductase that to provide the first stable enzyme-free MonAzPs intermediate, 6-(4-hydroxy-2-oxopentyl)-3-methyl-2,4-dioxocyclohexane carbaldehyde, also known as M7PKS-1. The FAD-dependent monooxygenase pigN hydroxylates M7PKS-1 at C-4, which triggers the formation of the pyran ring. PigJ, pigK and pigD are involved in the acetylation of the pyran ring. PigJ and pigK form the two subunits of a dedicated fungal FAS that produces the side chain fatty acyl moiety of MonAzPs and pigD transfers the fatty acyl chain to the C-4 alcohol. PigM and pigO are involved in the elimination of the omega-1 alcohol. PigM acts as an O-acetyltransferase that synthesizes the putative O-11 acetyl intermediate whereas pigO eliminates acetic acid to yield an intermediate with a C10(11) double bond. The dehydration of the C-11 alcohol followed by the reduction of the C6(7) double bond by the NAD(P)H-dependent oxidoreductase pigE increases the electrophilicity of the C-5 ketone of the resulting acyl benzopyran. This in turn sets up the C-5 ketone for an intramolecular Knoevenagel aldol condensation with the C-20 enol of the side chain. This condensation affords the characteristic linear tricyclic carbon skeletons of the yellow pigments that serve as the common precursors for the classical yellow pigments monascin and ankaflavin, orange pigments rubopunctatin and monascorubrin, and red pigments ribropunctamine and monascorubramine. The FAD-dependent oxidoreductase pigF is especially invoved in the biosynthesis of orange and red pigments via desaturation of C6(7). This chain is Non-reducing polyketide synthase pigA, found in Monascus ruber (Mold).